Here is a 536-residue protein sequence, read N- to C-terminus: Protein SDS23 (536 aa).

Composition is skewed to polar residues over residues 1 to 17 and 42 to 55; these read MPNP…QASR and FSLS…SVAT. The interval 1–72 is disordered; sequence MPNPFSRTPQ…RGSVSAGTTS (72 aa). CBS domains lie at 192-255 and 267-327; these read LHPK…RFPS and LNIG…NQDL. Positions 439–460 are enriched in low complexity; the sequence is SNPSTGSGSVSGSVSGTNSASG. Disordered regions lie at residues 439–466 and 496–536; these read SNPS…AGDS and PGLA…FGKE.

This sequence belongs to the SDS23 family.

Its subcellular location is the cytoplasm. The protein resides in the nucleus. In terms of biological role, involved in DNA replication and cell separation. The protein is Protein SDS23 (SDS23) of Meyerozyma guilliermondii (strain ATCC 6260 / CBS 566 / DSM 6381 / JCM 1539 / NBRC 10279 / NRRL Y-324) (Yeast).